The primary structure comprises 440 residues: Enolase 1 (440 aa).

Histidine 161 and glutamate 170 together coordinate substrate. Residue glutamate 213 is the Proton donor of the active site. 3 residues coordinate Mg(2+): aspartate 248, glutamate 297, and aspartate 324. Substrate contacts are provided by glutamate 297 and aspartate 324. Lysine 349 acts as the Proton acceptor in catalysis. Substrate contacts are provided by residues 376-379 (SHRS) and lysine 400.

Belongs to the enolase family. In terms of assembly, homodimer. It depends on Mg(2+) as a cofactor.

The protein localises to the cytoplasm. It carries out the reaction (2R)-2-phosphoglycerate = phosphoenolpyruvate + H2O. The protein operates within carbohydrate degradation; glycolysis; pyruvate from D-glyceraldehyde 3-phosphate: step 4/5. This chain is Enolase 1 (ENO1), found in Candida albicans (strain SC5314 / ATCC MYA-2876) (Yeast).